We begin with the raw amino-acid sequence, 230 residues long: 2-C-methyl-D-erythritol 4-phosphate cytidylyltransferase (230 aa).

It belongs to the IspD/TarI cytidylyltransferase family. IspD subfamily.

The enzyme catalyses 2-C-methyl-D-erythritol 4-phosphate + CTP + H(+) = 4-CDP-2-C-methyl-D-erythritol + diphosphate. It functions in the pathway isoprenoid biosynthesis; isopentenyl diphosphate biosynthesis via DXP pathway; isopentenyl diphosphate from 1-deoxy-D-xylulose 5-phosphate: step 2/6. Catalyzes the formation of 4-diphosphocytidyl-2-C-methyl-D-erythritol from CTP and 2-C-methyl-D-erythritol 4-phosphate (MEP). In Nocardia farcinica (strain IFM 10152), this protein is 2-C-methyl-D-erythritol 4-phosphate cytidylyltransferase.